The following is a 296-amino-acid chain: NAD kinase (296 aa).

D72 functions as the Proton acceptor in the catalytic mechanism. NAD(+)-binding positions include 72–73 (DG), 146–147 (ND), R157, K174, D176, 187–192 (TAYALS), and Q247.

It belongs to the NAD kinase family. A divalent metal cation serves as cofactor.

Its subcellular location is the cytoplasm. It catalyses the reaction NAD(+) + ATP = ADP + NADP(+) + H(+). Its function is as follows. Involved in the regulation of the intracellular balance of NAD and NADP, and is a key enzyme in the biosynthesis of NADP. Catalyzes specifically the phosphorylation on 2'-hydroxyl of the adenosine moiety of NAD to yield NADP. The protein is NAD kinase of Pseudomonas syringae pv. tomato (strain ATCC BAA-871 / DC3000).